The chain runs to 387 residues: Phosphoglycerate kinase (387 aa).

Residues 21–23 (DLN), R36, 59–62 (HLGR), R113, and R146 each bind substrate. Residues K197, E314, and 340–343 (GGDT) contribute to the ATP site.

It belongs to the phosphoglycerate kinase family. In terms of assembly, monomer.

Its subcellular location is the cytoplasm. The enzyme catalyses (2R)-3-phosphoglycerate + ATP = (2R)-3-phospho-glyceroyl phosphate + ADP. The protein operates within carbohydrate degradation; glycolysis; pyruvate from D-glyceraldehyde 3-phosphate: step 2/5. The protein is Phosphoglycerate kinase of Pseudomonas paraeruginosa (strain DSM 24068 / PA7) (Pseudomonas aeruginosa (strain PA7)).